The chain runs to 187 residues: dTTP/UTP pyrophosphatase (187 aa).

Asp-65 functions as the Proton acceptor in the catalytic mechanism.

It belongs to the Maf family. YhdE subfamily. A divalent metal cation serves as cofactor.

The protein resides in the cytoplasm. The catalysed reaction is dTTP + H2O = dTMP + diphosphate + H(+). It catalyses the reaction UTP + H2O = UMP + diphosphate + H(+). Functionally, nucleoside triphosphate pyrophosphatase that hydrolyzes dTTP and UTP. May have a dual role in cell division arrest and in preventing the incorporation of modified nucleotides into cellular nucleic acids. The protein is dTTP/UTP pyrophosphatase of Pyrococcus abyssi (strain GE5 / Orsay).